The following is a 147-amino-acid chain: Allograft inflammatory factor 1 (147 aa).

Ser2 carries the N-acetylserine modification. N6-acetyllysine is present on Lys11. Residue Ser39 is modified to Phosphoserine. EF-hand domains follow at residues Ser45–Pro80 and Lys81–Ser115. 6 residues coordinate Ca(2+): Asp58, Asn60, Asn62, Asp64, Thr100, and Asp105. Positions Ala128–Pro147 are disordered.

As to quaternary structure, homodimer (Potential). Monomer. Interacts with LCP1. In terms of processing, phosphorylated on serine residues.

The protein localises to the cytoplasm. The protein resides in the cytoskeleton. It localises to the cell projection. Its subcellular location is the ruffle membrane. It is found in the phagocytic cup. In terms of biological role, actin-binding protein that enhances membrane ruffling and RAC activation. Enhances the actin-bundling activity of LCP1. Binds calcium. Plays a role in RAC signaling and in phagocytosis. May play a role in macrophage activation and function. Promotes the proliferation of vascular smooth muscle cells and of T-lymphocytes. Enhances lymphocyte migration. Plays a role in vascular inflammation. This is Allograft inflammatory factor 1 (AIF1) from Macaca mulatta (Rhesus macaque).